Reading from the N-terminus, the 203-residue chain is Sarcosine oxidase subunit gamma (203 aa).

This sequence belongs to the SoxG family. As to quaternary structure, heterotetramer composed of subunits alpha (SoxA), beta (SoxB), gamma (SoxG) and delta (SoxD).

The protein localises to the cytoplasm. It catalyses the reaction sarcosine + (6S)-5,6,7,8-tetrahydrofolate + O2 = (6R)-5,10-methylene-5,6,7,8-tetrahydrofolate + glycine + H2O2. It carries out the reaction sarcosine + O2 + H2O = formaldehyde + glycine + H2O2. In the presence of tetrahydrofolate, catalyzes the oxidative demethylation of sarcosine to yield glycine, 5,10-methylenetetrahydrofolate and hydrogen peroxide. In the absence of tetrahydrofolate, catalyzes the oxidative demethylation of sarcosine to yield glycine, formaldehyde and hydrogen peroxide. In Corynebacterium sp. (strain P-1), this protein is Sarcosine oxidase subunit gamma.